The primary structure comprises 242 residues: uncharacterized protein (242 aa).

This is an uncharacterized protein from Bacillus subtilis (strain 168).